The following is a 450-amino-acid chain: Chromosomal replication initiator protein DnaA (450 aa).

A domain I, interacts with DnaA modulators region spans residues methionine 1–phenylalanine 71. Positions phenylalanine 71 to threonine 113 are domain II. The tract at residues glutamine 82–serine 103 is disordered. The domain III, AAA+ region stretch occupies residues asparagine 114–alanine 330. Residues glycine 158, glycine 160, lysine 161, and threonine 162 each coordinate ATP. Positions serine 331 to asparagine 450 are domain IV, binds dsDNA.

This sequence belongs to the DnaA family. As to quaternary structure, oligomerizes as a right-handed, spiral filament on DNA at oriC.

It is found in the cytoplasm. In terms of biological role, plays an essential role in the initiation and regulation of chromosomal replication. ATP-DnaA binds to the origin of replication (oriC) to initiate formation of the DNA replication initiation complex once per cell cycle. Binds the DnaA box (a 9 base pair repeat at the origin) and separates the double-stranded (ds)DNA. Forms a right-handed helical filament on oriC DNA; dsDNA binds to the exterior of the filament while single-stranded (ss)DNA is stabiized in the filament's interior. The ATP-DnaA-oriC complex binds and stabilizes one strand of the AT-rich DNA unwinding element (DUE), permitting loading of DNA polymerase. After initiation quickly degrades to an ADP-DnaA complex that is not apt for DNA replication. Binds acidic phospholipids. The chain is Chromosomal replication initiator protein DnaA from Geobacter metallireducens (strain ATCC 53774 / DSM 7210 / GS-15).